A 187-amino-acid polypeptide reads, in one-letter code: ATP synthase subunit delta (187 aa).

This sequence belongs to the ATPase delta chain family. In terms of assembly, F-type ATPases have 2 components, F(1) - the catalytic core - and F(0) - the membrane proton channel. F(1) has five subunits: alpha(3), beta(3), gamma(1), delta(1), epsilon(1). F(0) has three main subunits: a(1), b(2) and c(10-14). The alpha and beta chains form an alternating ring which encloses part of the gamma chain. F(1) is attached to F(0) by a central stalk formed by the gamma and epsilon chains, while a peripheral stalk is formed by the delta and b chains.

Its subcellular location is the cell inner membrane. F(1)F(0) ATP synthase produces ATP from ADP in the presence of a proton or sodium gradient. F-type ATPases consist of two structural domains, F(1) containing the extramembraneous catalytic core and F(0) containing the membrane proton channel, linked together by a central stalk and a peripheral stalk. During catalysis, ATP synthesis in the catalytic domain of F(1) is coupled via a rotary mechanism of the central stalk subunits to proton translocation. Functionally, this protein is part of the stalk that links CF(0) to CF(1). It either transmits conformational changes from CF(0) to CF(1) or is implicated in proton conduction. This is ATP synthase subunit delta from Leptospira biflexa serovar Patoc (strain Patoc 1 / Ames).